Here is a 214-residue protein sequence, read N- to C-terminus: MIDQKQTNNLCLRWKGKQRRIGITGGIASGKTIIGDFLFQAKQWPILDADLYAHEALSAESEIVKKVWLRYGSKIIKNSSKNDQIINRKALAKIVFQNELEKKWLEGIIHPFVNKRIEEELEKSKSNSIVILIIPLLFEKNYTGLCSEICYIDCPRSMQLKRLQSRDNLSIKEANQRIDAQWANSLKKQFADHIINNSNDDETWKLQLKKLYKF.

The 195-residue stretch at 20–214 (RIGITGGIAS…KLQLKKLYKF (195 aa)) folds into the DPCK domain. Residue 28-33 (ASGKTI) participates in ATP binding.

Belongs to the CoaE family.

It localises to the cytoplasm. The enzyme catalyses 3'-dephospho-CoA + ATP = ADP + CoA + H(+). It participates in cofactor biosynthesis; coenzyme A biosynthesis; CoA from (R)-pantothenate: step 5/5. Catalyzes the phosphorylation of the 3'-hydroxyl group of dephosphocoenzyme A to form coenzyme A. The polypeptide is Dephospho-CoA kinase (Prochlorococcus marinus (strain NATL2A)).